Here is a 212-residue protein sequence, read N- to C-terminus: MLYFESLKDKFALNEKQLNKFVFYYEFLKQENQKMNLTSIISLSDVCYKHFYDSLILKEIFNFNTVTNLCDVDSGAGFPSFPLKILFPHLKIVIIESSLKKINFLKQLSSHLELDNICFFHQRVEQYDIAKNGSYDCVVARALARLELILKWCVPLVKKKGYFIAMKGKNFQQELEASKKIIKQIRVKLVSAKTLELPMQLGTRTNLLFQNE.

S-adenosyl-L-methionine is bound by residues phenylalanine 78, 96-98 (ESS), 124-125 (VE), and arginine 141.

This sequence belongs to the methyltransferase superfamily. RNA methyltransferase RsmG family.

The protein localises to the cytoplasm. Specifically methylates the N7 position of a guanine in 16S rRNA. In Onion yellows phytoplasma (strain OY-M), this protein is Ribosomal RNA small subunit methyltransferase G.